The following is a 245-amino-acid chain: NLP effector protein Pc118551 (245 aa).

The signal sequence occupies residues M1–A19. A Hepta-peptide GHRHDWE motif motif is present at residues Q121–E127. N140 is a glycosylation site (N-linked (GlcNAc...) asparagine).

Belongs to the Necrosis inducing protein (NPP1) family.

It is found in the secreted. Its function is as follows. Secreted effector that contributes strongly to virulence during infection by P.capsici. This Phytophthora capsici protein is NLP effector protein Pc118551.